The chain runs to 202 residues: Crossover junction endodeoxyribonuclease RuvC (202 aa).

Residues aspartate 7, glutamate 68, and aspartate 141 contribute to the active site. Residues aspartate 7, glutamate 68, and aspartate 141 each contribute to the Mg(2+) site.

This sequence belongs to the RuvC family. In terms of assembly, homodimer which binds Holliday junction (HJ) DNA. The HJ becomes 2-fold symmetrical on binding to RuvC with unstacked arms; it has a different conformation from HJ DNA in complex with RuvA. In the full resolvosome a probable DNA-RuvA(4)-RuvB(12)-RuvC(2) complex forms which resolves the HJ. It depends on Mg(2+) as a cofactor.

It is found in the cytoplasm. The catalysed reaction is Endonucleolytic cleavage at a junction such as a reciprocal single-stranded crossover between two homologous DNA duplexes (Holliday junction).. Functionally, the RuvA-RuvB-RuvC complex processes Holliday junction (HJ) DNA during genetic recombination and DNA repair. Endonuclease that resolves HJ intermediates. Cleaves cruciform DNA by making single-stranded nicks across the HJ at symmetrical positions within the homologous arms, yielding a 5'-phosphate and a 3'-hydroxyl group; requires a central core of homology in the junction. The consensus cleavage sequence is 5'-(A/T)TT(C/G)-3'. Cleavage occurs on the 3'-side of the TT dinucleotide at the point of strand exchange. HJ branch migration catalyzed by RuvA-RuvB allows RuvC to scan DNA until it finds its consensus sequence, where it cleaves and resolves the cruciform DNA. This chain is Crossover junction endodeoxyribonuclease RuvC, found in Clavibacter michiganensis subsp. michiganensis (strain NCPPB 382).